Reading from the N-terminus, the 692-residue chain is DNA ligase (692 aa).

NAD(+) is bound by residues 40–44 (DAAYD), 89–90 (SL), and Glu-121. The N6-AMP-lysine intermediate role is filled by Lys-123. NAD(+)-binding residues include Arg-144, Glu-181, Lys-297, and Lys-321. Cys-415, Cys-417, Cys-439, and Cys-445 together coordinate Zn(2+). Positions 614–692 (KTDTAVAGKT…EDEWLEMVGS (79 aa)) constitute a BRCT domain.

It belongs to the NAD-dependent DNA ligase family. LigA subfamily. It depends on Mg(2+) as a cofactor. Requires Mn(2+) as cofactor.

It carries out the reaction NAD(+) + (deoxyribonucleotide)n-3'-hydroxyl + 5'-phospho-(deoxyribonucleotide)m = (deoxyribonucleotide)n+m + AMP + beta-nicotinamide D-nucleotide.. Functionally, DNA ligase that catalyzes the formation of phosphodiester linkages between 5'-phosphoryl and 3'-hydroxyl groups in double-stranded DNA using NAD as a coenzyme and as the energy source for the reaction. It is essential for DNA replication and repair of damaged DNA. This Phenylobacterium zucineum (strain HLK1) protein is DNA ligase.